The primary structure comprises 427 residues: Serine protease HTRA2, mitochondrial (427 aa).

Residues 33-55 form a disordered region; the sequence is HTASSSKGSGGDNSKDKENNGQN. The chain crosses the membrane as a helical span at residues 66-86; that stretch reads SAFQFCVPFSLGALVSAVLIE. The short motif at 78–81 is the IAP-binding element; the sequence is ALVS. Residues 144–307 are serine protease; it reads SNGSGFVIEQ…IPIDYVKVFL (164 aa). Residues His-162, Asp-194, and Ser-271 each act as charge relay system in the active site. The 86-residue stretch at 330 to 415 folds into the PDZ domain; that stretch reads MGITMLTLTP…DLEIVILRGV (86 aa).

It belongs to the peptidase S1C family. In terms of assembly, interacts with th/DIAP1 (via BIR 2 domain).

It is found in the mitochondrion intermembrane space. Its subcellular location is the mitochondrion membrane. The catalysed reaction is Cleavage of non-polar aliphatic amino-acids at the P1 position, with a preference for Val, Ile and Met. At the P2 and P3 positions, Arg is selected most strongly with a secondary preference for other hydrophilic residues.. Its function is as follows. Serine protease that shows proteolytic activity against a non-specific substrate beta-casein. Promotes or induces cell death either by direct binding to and inhibition of BIRC proteins (also called inhibitor of apoptosis proteins, IAPs), leading to an increase in caspase activity, or by a BIRC inhibition-independent, caspase-independent and serine protease activity-dependent mechanism. Can antagonize antiapoptotic activity of th/Diap1 by directly inducing the degradation of th/Diap1. In Drosophila pseudoobscura pseudoobscura (Fruit fly), this protein is Serine protease HTRA2, mitochondrial.